The sequence spans 496 residues: Glycine receptor subunit beta (496 aa).

Positions 1 to 22 are cleaved as a signal peptide; sequence MKFSLAVSFFILMSLLFEDACS. Residues 23–268 are Extracellular-facing; sequence KEKSSKKGKG…IFTLRRQVGF (246 aa). Asn-54 is a glycosylation site (N-linked (GlcNAc...) asparagine). Glycine is bound by residues Arg-108 and Ser-174. The cysteines at positions 183 and 197 are disulfide-linked. Asn-242 carries an N-linked (GlcNAc...) asparagine glycan. The cysteines at positions 243 and 255 are disulfide-linked. Glycine is bound at residue Thr-250. The chain crosses the membrane as a helical span at residues 269–289; that stretch reads YMMGVYAPTLLIVVLSWLSFW. Residues 290 to 294 are Cytoplasmic-facing; it reads INPDA. Residues 295–315 form a helical membrane-spanning segment; it reads SAARVPLGIFSVLSLASECTT. Topologically, residues 316–327 are extracellular; the sequence is LAAELPKVSYVK. Residues 328–349 form a helical membrane-spanning segment; that stretch reads ALDVWLIACLLFGFASLVEYAV. Residues 350-471 lie on the Cytoplasmic side of the membrane; sequence VQVMLNNPKR…KPVIPTAAKR (122 aa). Thr-391 bears the Phosphothreonine mark. Residues 472–495 form a helical membrane-spanning segment; sequence IDLYARALFPFCFLFFNVIYWSIY. A topological domain (extracellular) is located at residue Leu-496.

It belongs to the ligand-gated ion channel (TC 1.A.9) family. Glycine receptor (TC 1.A.9.3) subfamily. GLRB sub-subfamily. As to quaternary structure, forms heteropentamers with glycin receptor alpha subunits. Heteropentamers with GLRA1 can be composed of two GLRA1 and three GLRB subunits, or three GLRA1 and two GLRB subunits, or four GLRA1 subunits and one GLRB subunit. Forms heteropentamers with GLRA2. Functional GLRB-GLRA2 heteropentamers contain four GLRA2 subunits and one GLRB subunit, although alternative subunit composition cannot be excluded. Forms a heteropentamer with GLRA3. Interacts with GPHN. In terms of tissue distribution, detected in spinal cord and brain stem (at protein level). Detected in spinal cord, cerebellum and brain cortex.

The protein localises to the postsynaptic cell membrane. It is found in the cell membrane. The protein resides in the synapse. It localises to the perikaryon. Its subcellular location is the cell projection. The protein localises to the dendrite. It is found in the cytoplasm. It carries out the reaction chloride(in) = chloride(out). Its activity is regulated as follows. Channel opening is triggered by extracellular glycine. Heteropentameric channels composed of GLRB and GLRA1 are activated by lower glycine levels than homopentameric GLRA1. Its function is as follows. Subunit of heteromeric glycine-gated chloride channels. Plays an important role in the down-regulation of neuronal excitability. Contributes to the generation of inhibitory postsynaptic currents. This chain is Glycine receptor subunit beta (Glrb), found in Rattus norvegicus (Rat).